The sequence spans 397 residues: Phosphoglycerate kinase (397 aa).

Residues D21 to N23, R37, H60 to R63, R119, and R152 each bind substrate. ATP is bound by residues K203, G294, E325, and G354–S357.

This sequence belongs to the phosphoglycerate kinase family. Monomer.

The protein resides in the cytoplasm. It catalyses the reaction (2R)-3-phosphoglycerate + ATP = (2R)-3-phospho-glyceroyl phosphate + ADP. The protein operates within carbohydrate degradation; glycolysis; pyruvate from D-glyceraldehyde 3-phosphate: step 2/5. This chain is Phosphoglycerate kinase, found in Pelodictyon phaeoclathratiforme (strain DSM 5477 / BU-1).